A 261-amino-acid chain; its full sequence is Guanine nucleotide exchange factor BopE (261 aa).

The span at 241 to 253 (RRAAQDASRDEKG) shows a compositional bias: basic and acidic residues. The interval 241–261 (RRAAQDASRDEKGAANAADGA) is disordered.

It belongs to the GEF (guanine exchange factor) SopE family. As to quaternary structure, monomer. Interacts with human CDC42.

The protein resides in the secreted. Activator for both CDC42 and RAC1 by directly interacting with these Rho GTPases and acting as a guanine nucleotide exchange factor (GEF). This activation results in actin cytoskeleton rearrangements and stimulates membrane ruffling, thus promoting bacterial entry into non-phagocytic cells. The polypeptide is Guanine nucleotide exchange factor BopE (bopE) (Burkholderia thailandensis (strain ATCC 700388 / DSM 13276 / CCUG 48851 / CIP 106301 / E264)).